The sequence spans 29 residues: Cytochrome b6-f complex subunit 8 (29 aa).

The helical transmembrane segment at isoleucine 3–valine 23 threads the bilayer.

The protein belongs to the PetN family. In terms of assembly, the 4 large subunits of the cytochrome b6-f complex are cytochrome b6, subunit IV (17 kDa polypeptide, PetD), cytochrome f and the Rieske protein, while the 4 small subunits are PetG, PetL, PetM and PetN. The complex functions as a dimer.

The protein localises to the cellular thylakoid membrane. Its function is as follows. Component of the cytochrome b6-f complex, which mediates electron transfer between photosystem II (PSII) and photosystem I (PSI), cyclic electron flow around PSI, and state transitions. In Mastigocladus laminosus (Fischerella sp.), this protein is Cytochrome b6-f complex subunit 8.